The following is a 368-amino-acid chain: Ribosomal RNA large subunit methyltransferase M (368 aa).

S-adenosyl-L-methionine contacts are provided by residues S189, 222 to 225, D241, D261, and D278; that span reads CPGG. K307 functions as the Proton acceptor in the catalytic mechanism.

Belongs to the class I-like SAM-binding methyltransferase superfamily. RNA methyltransferase RlmE family. RlmM subfamily. As to quaternary structure, monomer.

Its subcellular location is the cytoplasm. It carries out the reaction cytidine(2498) in 23S rRNA + S-adenosyl-L-methionine = 2'-O-methylcytidine(2498) in 23S rRNA + S-adenosyl-L-homocysteine + H(+). Functionally, catalyzes the 2'-O-methylation at nucleotide C2498 in 23S rRNA. The sequence is that of Ribosomal RNA large subunit methyltransferase M from Yersinia pestis bv. Antiqua (strain Angola).